A 90-amino-acid polypeptide reads, in one-letter code: Probable Fe(2+)-trafficking protein (90 aa).

This sequence belongs to the Fe(2+)-trafficking protein family.

In terms of biological role, could be a mediator in iron transactions between iron acquisition and iron-requiring processes, such as synthesis and/or repair of Fe-S clusters in biosynthetic enzymes. In Ectopseudomonas mendocina (strain ymp) (Pseudomonas mendocina), this protein is Probable Fe(2+)-trafficking protein.